The primary structure comprises 116 residues: Toxin ICK-10 (116 aa).

Residues methionine 1–alanine 19 form the signal peptide. Cystine bridges form between cysteine 56-cysteine 71, cysteine 64-cysteine 77, cysteine 68-cysteine 113, and cysteine 70-cysteine 84.

The protein belongs to the neurotoxin 25 family. ICK-8 subfamily. As to expression, expressed by the venom gland.

The protein localises to the secreted. Ion channel inhibitor. The chain is Toxin ICK-10 from Trittame loki (Brush-footed trapdoor spider).